The sequence spans 583 residues: Inactive tyrosine-protein kinase RYK (583 aa).

A signal peptide spans 1–18 (MILRYLIFFAQLWALCLA). The Extracellular segment spans residues 19–173 (NVNMFISKEE…EVDDTDSIDK (155 aa)). Positions 22 to 147 (MFISKEEMNR…KVKLRQEKIC (126 aa)) constitute a WIF domain. 2 N-linked (GlcNAc...) asparagine glycosylation sites follow: Asn30 and Asn46. The cysteines at positions 113 and 147 are disulfide-linked. The helical transmembrane segment at 174–194 (AFFVIICIAAAFLLIVAATLI) threads the bilayer. Topologically, residues 195–583 (CYFKRSKKED…DFNIQLSQYI (389 aa)) are cytoplasmic. A Protein kinase domain is found at 281 to 583 (FQSLPLDMEG…DFNIQLSQYI (303 aa)). Residues 287–295 (DMEGTFGEV) and Lys327 each bind ATP.

This sequence belongs to the protein kinase superfamily. Tyr protein kinase family.

The protein resides in the cell membrane. It is found in the basolateral cell membrane. In terms of biological role, has no detectable kinase activity in vitro and is unlikely to function as a tyrosine kinase in vivo. Receptor which may act as a receptor for Wnt ligand mom-2. Plays a role in controlling P7.p vulva precursor cell lineage orientation during vulva development. Regulates pop-1 asymmetric distribution in P7.p and its daughter cells. Plays a role in the migration of ALM neurons during embryogenesis. This Caenorhabditis elegans protein is Inactive tyrosine-protein kinase RYK.